The primary structure comprises 308 residues: Transcription initiation factor IIB (308 aa).

2 repeat units span residues 124 to 207 (NELE…LREL) and 218 to 299 (DYVT…ELTQ).

This sequence belongs to the TFIIB family.

Stabilizes TBP binding to an archaeal box-A promoter. Also responsible for recruiting RNA polymerase II to the pre-initiation complex (DNA-TBP-TFIIB). The chain is Transcription initiation factor IIB from Sulfurisphaera tokodaii (strain DSM 16993 / JCM 10545 / NBRC 100140 / 7) (Sulfolobus tokodaii).